We begin with the raw amino-acid sequence, 273 residues long: Formamidopyrimidine-DNA glycosylase (273 aa).

Catalysis depends on Pro2, which acts as the Schiff-base intermediate with DNA. The active-site Proton donor is Glu3. Catalysis depends on Lys58, which acts as the Proton donor; for beta-elimination activity. 3 residues coordinate DNA: His91, Arg110, and Arg153. The FPG-type zinc-finger motif lies at 238-272 (KVYGKEGQPCPRCGEDFVKIKISGRGTTYCLHCQK). Arg262 serves as the catalytic Proton donor; for delta-elimination activity.

It belongs to the FPG family. In terms of assembly, monomer. Requires Zn(2+) as cofactor.

It catalyses the reaction Hydrolysis of DNA containing ring-opened 7-methylguanine residues, releasing 2,6-diamino-4-hydroxy-5-(N-methyl)formamidopyrimidine.. It carries out the reaction 2'-deoxyribonucleotide-(2'-deoxyribose 5'-phosphate)-2'-deoxyribonucleotide-DNA = a 3'-end 2'-deoxyribonucleotide-(2,3-dehydro-2,3-deoxyribose 5'-phosphate)-DNA + a 5'-end 5'-phospho-2'-deoxyribonucleoside-DNA + H(+). In terms of biological role, involved in base excision repair of DNA damaged by oxidation or by mutagenic agents. Acts as a DNA glycosylase that recognizes and removes damaged bases. Has a preference for oxidized purines, such as 7,8-dihydro-8-oxoguanine (8-oxoG). Has AP (apurinic/apyrimidinic) lyase activity and introduces nicks in the DNA strand. Cleaves the DNA backbone by beta-delta elimination to generate a single-strand break at the site of the removed base with both 3'- and 5'-phosphates. This is Formamidopyrimidine-DNA glycosylase from Lactobacillus delbrueckii subsp. bulgaricus (strain ATCC 11842 / DSM 20081 / BCRC 10696 / JCM 1002 / NBRC 13953 / NCIMB 11778 / NCTC 12712 / WDCM 00102 / Lb 14).